The primary structure comprises 485 residues: Aspartyl/glutamyl-tRNA(Asn/Gln) amidotransferase subunit B (485 aa).

Belongs to the GatB/GatE family. GatB subfamily. Heterotrimer of A, B and C subunits.

The catalysed reaction is L-glutamyl-tRNA(Gln) + L-glutamine + ATP + H2O = L-glutaminyl-tRNA(Gln) + L-glutamate + ADP + phosphate + H(+). The enzyme catalyses L-aspartyl-tRNA(Asn) + L-glutamine + ATP + H2O = L-asparaginyl-tRNA(Asn) + L-glutamate + ADP + phosphate + 2 H(+). Its function is as follows. Allows the formation of correctly charged Asn-tRNA(Asn) or Gln-tRNA(Gln) through the transamidation of misacylated Asp-tRNA(Asn) or Glu-tRNA(Gln) in organisms which lack either or both of asparaginyl-tRNA or glutaminyl-tRNA synthetases. The reaction takes place in the presence of glutamine and ATP through an activated phospho-Asp-tRNA(Asn) or phospho-Glu-tRNA(Gln). This chain is Aspartyl/glutamyl-tRNA(Asn/Gln) amidotransferase subunit B, found in Anaplasma marginale (strain St. Maries).